The sequence spans 232 residues: RNA chaperone ProQ (232 aa).

The interval E105 to D182 is disordered. Residues Q117 to R136 are compositionally biased toward basic and acidic residues. The span at R137 to P146 shows a compositional bias: basic residues. The segment covering R147–H177 has biased composition (basic and acidic residues).

Belongs to the ProQ family.

The protein resides in the cytoplasm. Its function is as follows. RNA chaperone with significant RNA binding, RNA strand exchange and RNA duplexing activities. May regulate ProP activity through an RNA-based, post-transcriptional mechanism. The polypeptide is RNA chaperone ProQ (Shigella dysenteriae serotype 1 (strain Sd197)).